The following is a 525-amino-acid chain: Ribosomal protein S6 kinase beta-1 (525 aa).

The disordered stretch occupies residues 1 to 54; sequence MRRRRRRDGFYPAPDFRDREAEDMAGVFDIDLDQPEDAGSEDELEEGGQLNESM. The TOS motif signature appears at 28 to 32; sequence FDIDL. Positions 30–46 are enriched in acidic residues; the sequence is IDLDQPEDAGSEDELEE. The 262-residue stretch at 91-352 folds into the Protein kinase domain; it reads FELLRVLGKG…AGEVQAHPFF (262 aa). ATP-binding positions include 97 to 105 and lysine 123; that span reads LGKGGYGKV. The active-site Proton acceptor is aspartate 218. Position 252 is a phosphothreonine; by PDPK1 (threonine 252). In terms of domain architecture, AGC-kinase C-terminal spans 353–423; it reads RHINWEELLA…VAPSVLESVK (71 aa). The segment at 380-399 is disordered; it reads SQFDSKFTRQTPVDSPDDST. The segment covering 381–399 has biased composition (polar residues); that stretch reads QFDSKFTRQTPVDSPDDST. A Phosphoserine modification is found at serine 394. A Phosphothreonine; by MTOR, NEK6 and NEK7 modification is found at threonine 412. Residues 424-525 form an autoinhibitory domain region; the sequence is EKFSFEPKIR…KRPEHLRMNL (102 aa). Serine 434 and serine 441 each carry phosphoserine. Threonine 444 is subject to Phosphothreonine. Serine 447 and serine 452 each carry phosphoserine. Lysine 516 bears the N6-acetyllysine mark.

The protein belongs to the protein kinase superfamily. AGC Ser/Thr protein kinase family. S6 kinase subfamily. Interacts with PPP1R9A/neurabin-1. Interacts with RPTOR. Interacts with IRS1. Interacts with EIF3B and EIF3C. Interacts with TRAF4. Interacts with POLDIP3. Interacts (via N-terminus) with IER5. In terms of assembly, (Microbial infection) Interacts with Mumps virus phosphoprotein; this interaction may play a role in the viral replication and transcription. Post-translationally, phosphorylation at Thr-412 is regulated by mTORC1. The phosphorylation at this site is maintained by an agonist-dependent autophosphorylation mechanism. Activated by phosphorylation at Thr-252 by PDPK1. Dephosphorylation by PPP1CC at Thr-412 in mitochondrion. As to expression, widely expressed.

Its subcellular location is the synapse. The protein localises to the synaptosome. The protein resides in the mitochondrion outer membrane. It is found in the mitochondrion. It localises to the nucleus. Its subcellular location is the cytoplasm. The catalysed reaction is L-seryl-[protein] + ATP = O-phospho-L-seryl-[protein] + ADP + H(+). The enzyme catalyses L-threonyl-[protein] + ATP = O-phospho-L-threonyl-[protein] + ADP + H(+). Activation requires multiple phosphorylation events on serine/threonine residues. Activation appears to be first mediated by phosphorylation of multiple sites in the autoinhibitory domain, which facilitates phosphorylation at Thr-412, disrupting the autoinhibitory mechanism and allowing phosphorylation of Thr-252 by PDPK1. The active conformation of the kinase is believed to be stabilized by a mechanism involving three conserved phosphorylation sites located in the kinase domain activation loop (Thr-252) and in the AGC-kinase C-terminal domain (Ser-394 in the middle of the tail/linker region and Thr-412 within a hydrophobic motif at its end). Activated by mTORC1; isoform Alpha I and isoform Alpha II are sensitive to rapamycin, which inhibits activating phosphorylation at Thr-412. Activated by PDPK1. Functionally, serine/threonine-protein kinase that acts downstream of mTOR signaling in response to growth factors and nutrients to promote cell proliferation, cell growth and cell cycle progression. Regulates protein synthesis through phosphorylation of EIF4B, RPS6 and EEF2K, and contributes to cell survival by repressing the pro-apoptotic function of BAD. Under conditions of nutrient depletion, the inactive form associates with the EIF3 translation initiation complex. Upon mitogenic stimulation, phosphorylation by the mechanistic target of rapamycin complex 1 (mTORC1) leads to dissociation from the EIF3 complex and activation. The active form then phosphorylates and activates several substrates in the pre-initiation complex, including the EIF2B complex and the cap-binding complex component EIF4B. Also controls translation initiation by phosphorylating a negative regulator of EIF4A, PDCD4, targeting it for ubiquitination and subsequent proteolysis. Promotes initiation of the pioneer round of protein synthesis by phosphorylating POLDIP3/SKAR. In response to IGF1, activates translation elongation by phosphorylating EEF2 kinase (EEF2K), which leads to its inhibition and thus activation of EEF2. Also plays a role in feedback regulation of mTORC2 by mTORC1 by phosphorylating MAPKAP1/SIN1, MTOR and RICTOR, resulting in the inhibition of mTORC2 and AKT1 signaling. Also involved in feedback regulation of mTORC1 and mTORC2 by phosphorylating DEPTOR. Mediates cell survival by phosphorylating the pro-apoptotic protein BAD and suppressing its pro-apoptotic function. Phosphorylates mitochondrial URI1 leading to dissociation of a URI1-PPP1CC complex. The free mitochondrial PPP1CC can then dephosphorylate RPS6KB1 at Thr-412, which is proposed to be a negative feedback mechanism for the RPS6KB1 anti-apoptotic function. Mediates TNF-alpha-induced insulin resistance by phosphorylating IRS1 at multiple serine residues, resulting in accelerated degradation of IRS1. In cells lacking functional TSC1-2 complex, constitutively phosphorylates and inhibits GSK3B. May be involved in cytoskeletal rearrangement through binding to neurabin. Phosphorylates and activates the pyrimidine biosynthesis enzyme CAD, downstream of MTOR. Following activation by mTORC1, phosphorylates EPRS and thereby plays a key role in fatty acid uptake by adipocytes and also most probably in interferon-gamma-induced translation inhibition. This Homo sapiens (Human) protein is Ribosomal protein S6 kinase beta-1 (RPS6KB1).